The following is a 259-amino-acid chain: Global transcriptional regulator CodY (259 aa).

The GAF domain stretch occupies residues 1-155; that stretch reads MALLQKTRKI…GATVVGMEIL (155 aa). The H-T-H motif DNA-binding region spans 203–222; sequence ASKIADRVGITRSVIVNALR. At S215 the chain carries Phosphoserine.

The protein belongs to the CodY family.

Its subcellular location is the cytoplasm. Its function is as follows. DNA-binding global transcriptional regulator which is involved in the adaptive response to starvation and acts by directly or indirectly controlling the expression of numerous genes in response to nutrient availability. During rapid exponential growth, CodY is highly active and represses genes whose products allow adaptation to nutrient depletion. This is Global transcriptional regulator CodY from Bacillus licheniformis (strain ATCC 14580 / DSM 13 / JCM 2505 / CCUG 7422 / NBRC 12200 / NCIMB 9375 / NCTC 10341 / NRRL NRS-1264 / Gibson 46).